Reading from the N-terminus, the 238-residue chain is Probable transcriptional regulatory protein YeeN (238 aa).

The protein belongs to the TACO1 family. YeeN subfamily.

The protein resides in the cytoplasm. The polypeptide is Probable transcriptional regulatory protein YeeN (Shigella flexneri).